A 444-amino-acid polypeptide reads, in one-letter code: Acyl-CoA 6-desaturase (444 aa).

At 1–130 (MGGGGQQTDR…EAEGCFKTQP (130 aa)) the chain is on the cytoplasmic side. The Cytochrome b5 heme-binding domain maps to 18–95 (FSSYTWEEVQ…LKPLLIGELE (78 aa)). A helical membrane pass occupies residues 131–151 (LFFALHLGHILLLEAIAFMMV). At 152 to 157 (WYFGTG) the chain is on the lumenal side. Residues 158 to 178 (WINTLIVAVILATAQSQAGWL) form a helical membrane-spanning segment. Residues 179–264 (QHDFGHLSVF…KHLPYNHQHK (86 aa)) lie on the Cytoplasmic side of the membrane. The short motif at 180-184 (HDFGH) is the Histidine box-1 element. A Histidine box-2 motif is present at residues 217–221 (HFQHH). A helical transmembrane segment spans residues 265–285 (YFFFIGPPLLIPVYFQFQIFH). Over 286–305 (NMISHGMWVDLLWCISYYVR) the chain is Lumenal. A helical membrane pass occupies residues 306–326 (YFLCYTQFYGVFWAIILFNFV). Residues 327–444 (RFMESHWFVW…ELWLDAYLNK (118 aa)) are Cytoplasmic-facing. The short motif at 382–386 (QIEHH) is the Histidine box-3 element.

This sequence belongs to the fatty acid desaturase type 1 family.

The protein localises to the endoplasmic reticulum membrane. It catalyses the reaction (9Z,12Z)-octadecadienoyl-CoA + 2 Fe(II)-[cytochrome b5] + O2 + 2 H(+) = (6Z,9Z,12Z)-octadecatrienoyl-CoA + 2 Fe(III)-[cytochrome b5] + 2 H2O. The catalysed reaction is (9Z,12Z,15Z)-octadecatrienoyl-CoA + 2 Fe(II)-[cytochrome b5] + O2 + 2 H(+) = (6Z,9Z,12Z,15Z)-octadecatetraenoyl-CoA + 2 Fe(III)-[cytochrome b5] + 2 H2O. The enzyme catalyses (8Z,11Z,14Z,17Z)-eicosatetraenoyl-CoA + 2 Fe(II)-[cytochrome b5] + O2 + 2 H(+) = (5Z,8Z,11Z,14Z,17Z)-eicosapentaenoyl-CoA + 2 Fe(III)-[cytochrome b5] + 2 H2O. It carries out the reaction (8Z,11Z,14Z)-eicosatrienoyl-CoA + 2 Fe(II)-[cytochrome b5] + O2 + 2 H(+) = (5Z,8Z,11Z,14Z)-eicosatetraenoyl-CoA + 2 Fe(III)-[cytochrome b5] + 2 H2O. The protein operates within lipid metabolism; polyunsaturated fatty acid biosynthesis. Fatty acid desaturase with bifunctional delta-5 and delta-6 activities. Component of a lipid metabolic pathway that catalyzes the biosynthesis of polyunsaturated fatty acids (PUFA) with preference toward n-3 substrates and Delta-6 function. This chain is Acyl-CoA 6-desaturase (fads2), found in Danio rerio (Zebrafish).